Consider the following 276-residue polypeptide: Large ribosomal subunit protein uL2 (276 aa).

Positions 224–276 (VAMNPVDHPHGGGEGKTGEGRVPVSPWGTPTKGYRTRRNKRTTSMIVQRRQKR) are disordered. Residues 230–242 (DHPHGGGEGKTGE) show a composition bias toward basic and acidic residues.

Belongs to the universal ribosomal protein uL2 family. In terms of assembly, part of the 50S ribosomal subunit. Forms a bridge to the 30S subunit in the 70S ribosome.

Functionally, one of the primary rRNA binding proteins. Required for association of the 30S and 50S subunits to form the 70S ribosome, for tRNA binding and peptide bond formation. It has been suggested to have peptidyltransferase activity; this is somewhat controversial. Makes several contacts with the 16S rRNA in the 70S ribosome. This is Large ribosomal subunit protein uL2 from Polynucleobacter asymbioticus (strain DSM 18221 / CIP 109841 / QLW-P1DMWA-1) (Polynucleobacter necessarius subsp. asymbioticus).